The following is an 856-amino-acid chain: V-type proton ATPase 116 kDa subunit a 2 (856 aa).

Residues 1 to 393 are Cytoplasmic-facing; the sequence is MGSLFRSETM…DAYGVGSYRE (393 aa). A helical membrane pass occupies residues 394–412; sequence VNPALFTIITFPFLFAVMF. Topologically, residues 413-414 are vacuolar; that stretch reads GD. Residues 415-431 traverse the membrane as a helical segment; that stretch reads FGHGFVMFLFALLLVLN. The Cytoplasmic portion of the chain corresponds to 432 to 445; sequence ENHPRLNQSQEIMR. Residues 446–475 form a helical membrane-spanning segment; that stretch reads MFFNGRYILLLMGLFSVYTGLIYNDCFSKS. The Vacuolar segment spans residues 476 to 549; that stretch reads VNLFGSGWNV…ATNRLTFLNS (74 aa). Asn484 and Asn505 each carry an N-linked (GlcNAc...) asparagine glycan. Residues 550–569 form a helical membrane-spanning segment; that stretch reads FKMKMSVILGIIHMTFGVIL. Topologically, residues 570–587 are cytoplasmic; that stretch reads GIFNHLHFRKKFNIYLVS. A helical membrane pass occupies residues 588 to 608; that stretch reads IPELLFMLCIFGYLIFMIFYK. Residues 609–651 are Vacuolar-facing; the sequence is WLVFSAETSRVAPSILIEFINMFLFPASKTSGLYTGQEYVQRV. The helical transmembrane segment at 652 to 671 threads the bilayer; sequence LLVVTALSVPVLFLGKPLFL. Residues 672 to 739 lie on the Cytoplasmic side of the membrane; sequence LWLHNGRSCF…EILMTQVIHS (68 aa). 2 positions are modified to phosphoserine: Ser695 and Ser700. Residues 740–764 traverse the membrane as a helical segment; sequence IEYCLGCISNTASYLRLWALSLAHA. Residues 765-785 lie on the Vacuolar side of the membrane; the sequence is QLSDVLWAMLMRVGLRVDTTY. The chain crosses the membrane as a helical span at residues 786 to 824; it reads GVLLLLPVIALFAVLTIFILLIMEGLSAFLHAIRLHWVE. Residues 825-856 are Cytoplasmic-facing; the sequence is FQNKFYVGAGTKFVPFSFSLLSSKFNNDDSVA.

The protein belongs to the V-ATPase 116 kDa subunit family. V-ATPase is a heteromultimeric enzyme made up of two complexes: the ATP-hydrolytic V1 complex and the proton translocation V0 complex. The V1 complex consists of three catalytic AB heterodimers that form a heterohexamer, three peripheral stalks each consisting of EG heterodimers, one central rotor including subunits D and F, and the regulatory subunits C and H. The proton translocation complex V0 consists of the proton transport subunit a, a ring of proteolipid subunits c9c'', rotary subunit d, subunits e and f, and the accessory subunits ATP6AP1/Ac45 and ATP6AP2/PRR. Directly interacts with PSCD2 through its N-terminal cytosolic tail in an intra-endosomal acidification-dependent manner. Disruption of this interaction results in the inhibition of endocytosis. Interacts with SPAAR.

It localises to the cell membrane. The protein localises to the endosome membrane. Functionally, subunit of the V0 complex of vacuolar(H+)-ATPase (V-ATPase), a multisubunit enzyme composed of a peripheral complex (V1) that hydrolyzes ATP and a membrane integral complex (V0) that translocates protons. V-ATPase is responsible for acidifying and maintaining the pH of intracellular compartments and in some cell types, is targeted to the plasma membrane, where it is responsible for acidifying the extracellular environment. Essential component of the endosomal pH-sensing machinery. May play a role in maintaining the Golgi functions, such as glycosylation maturation, by controlling the Golgi pH. In aerobic conditions, involved in intracellular iron homeostasis, thus triggering the activity of Fe(2+) prolyl hydroxylase (PHD) enzymes, and leading to HIF1A hydroxylation and subsequent proteasomal degradation. This Homo sapiens (Human) protein is V-type proton ATPase 116 kDa subunit a 2 (ATP6V0A2).